The following is a 545-amino-acid chain: SLAIN motif-containing protein 1 (545 aa).

A coiled-coil region spans residues 14 to 53 (TTNGLVANAELEVKKLQELVRKLEKQNEQLRNRASAVSNC). Composition is skewed to low complexity over residues 268 to 286 (TTSTCSSVSRPRSSFSLYS) and 466 to 481 (IPSSTSLQSLSSSGIP). Disordered stretches follow at residues 268–342 (TTST…IRDC) and 461–526 (QGGS…LQPP). Residues 503 to 522 (STANGSSIPRSKIAQPQRSF) are compositionally biased toward polar residues.

The protein belongs to the SLAIN motif-containing family.

It localises to the cytoplasm. The protein localises to the cytoskeleton. In terms of biological role, microtubule plus-end tracking protein that might be involved in the regulation of cytoplasmic microtubule dynamics, microtubule organization and microtubule elongation. This is SLAIN motif-containing protein 1 (slain1) from Xenopus tropicalis (Western clawed frog).